Here is a 468-residue protein sequence, read N- to C-terminus: Lipase 1 (468 aa).

The N-terminal stretch at 1–16 (MRGIAVFLAFISLIFA) is a signal peptide. Asn79 is a glycosylation site (N-linked (GlcNAc...) asparagine). A disulfide bridge connects residues Cys112 and Cys285. Catalysis depends on Ser196, which acts as the Charge relay system. Asn231 and Asn319 each carry an N-linked (GlcNAc...) asparagine glycan. Catalysis depends on charge relay system residues Asp348 and His381. Cys364 and Cys409 are oxidised to a cystine. N-linked (GlcNAc...) asparagine glycans are attached at residues Asn417, Asn422, and Asn451.

It belongs to the AB hydrolase superfamily. Lipase family. Class Lip subfamily.

It localises to the secreted. The catalysed reaction is a triacylglycerol + H2O = a diacylglycerol + a fatty acid + H(+). Secreted lipase that is able to hydrolyze both the neutral triacylglycerols and the monopalmitate ester Tween 40, allowing the use of hydrolyzed products as carbon sources. Has broad lipolytic activity, which may be important for colonization and subsequent infection, therefore contributing to the persistence and virulence in human tissue. The sequence is that of Lipase 1 from Candida albicans (strain SC5314 / ATCC MYA-2876) (Yeast).